We begin with the raw amino-acid sequence, 152 residues long: Protein IpgF (152 aa).

The first 17 residues, methionine 1 to arginine 17, serve as a signal peptide directing secretion.

It belongs to the IagB/IpgF/P19 family.

In Shigella flexneri, this protein is Protein IpgF (ipgF).